Reading from the N-terminus, the 396-residue chain is Tryptophan synthase beta chain (396 aa).

Lys-88 carries the post-translational modification N6-(pyridoxal phosphate)lysine.

Belongs to the TrpB family. Tetramer of two alpha and two beta chains. The cofactor is pyridoxal 5'-phosphate.

It carries out the reaction (1S,2R)-1-C-(indol-3-yl)glycerol 3-phosphate + L-serine = D-glyceraldehyde 3-phosphate + L-tryptophan + H2O. It participates in amino-acid biosynthesis; L-tryptophan biosynthesis; L-tryptophan from chorismate: step 5/5. Functionally, the beta subunit is responsible for the synthesis of L-tryptophan from indole and L-serine. The polypeptide is Tryptophan synthase beta chain (Shewanella oneidensis (strain ATCC 700550 / JCM 31522 / CIP 106686 / LMG 19005 / NCIMB 14063 / MR-1)).